The following is a 433-amino-acid chain: Transcriptional enhancer factor TEF-5 (433 aa).

Over residues 1–12 the composition is skewed to polar residues; the sequence is MASNSWNASSSP. The interval 1–35 is disordered; it reads MASNSWNASSSPGEGREDGQDGMDKSLDNDAEGVW. Positions 14-28 are enriched in basic and acidic residues; sequence EGREDGQDGMDKSLD. The TEA DNA-binding region spans 28–104; the sequence is DNDAEGVWSP…QVLARREISG (77 aa). The interval 171–433 is transcriptional activation; it reads GPSQDIKPFA…QHHVYKLVKD (263 aa).

In terms of tissue distribution, high levels in cardiac muscle, low in skeletal muscle. Intermediate levels in gizzard and lung, low levels in kidney.

It is found in the nucleus. Its function is as follows. Transcription factor which plays a key role in the Hippo signaling pathway, a pathway involved in organ size control and tumor suppression by restricting proliferation and promoting apoptosis. The core of this pathway is composed of a kinase cascade wherein MST1/MST2, in complex with its regulatory protein SAV1, phosphorylates and activates LATS1/2 in complex with its regulatory protein MOB1, which in turn phosphorylates and inactivates YAP1 oncoprotein and WWTR1/TAZ. The protein is Transcriptional enhancer factor TEF-5 (TEAD3) of Gallus gallus (Chicken).